Consider the following 304-residue polypeptide: UDP-3-O-acyl-N-acetylglucosamine deacetylase (304 aa).

His77, His233, and Asp237 together coordinate Zn(2+). Residue His260 is the Proton donor of the active site.

Belongs to the LpxC family. Zn(2+) serves as cofactor.

The enzyme catalyses a UDP-3-O-[(3R)-3-hydroxyacyl]-N-acetyl-alpha-D-glucosamine + H2O = a UDP-3-O-[(3R)-3-hydroxyacyl]-alpha-D-glucosamine + acetate. It functions in the pathway glycolipid biosynthesis; lipid IV(A) biosynthesis; lipid IV(A) from (3R)-3-hydroxytetradecanoyl-[acyl-carrier-protein] and UDP-N-acetyl-alpha-D-glucosamine: step 2/6. In terms of biological role, catalyzes the hydrolysis of UDP-3-O-myristoyl-N-acetylglucosamine to form UDP-3-O-myristoylglucosamine and acetate, the committed step in lipid A biosynthesis. The polypeptide is UDP-3-O-acyl-N-acetylglucosamine deacetylase (Lawsonia intracellularis (strain PHE/MN1-00)).